A 346-amino-acid chain; its full sequence is Insertion element IS476 uncharacterized 39.2 kDa protein (346 aa).

Residues 1-50 (MVSARPAFISGGPSTGGWRPTRQAAERTGGPEHSIEEVAGRGAPGHRSAE) form a disordered region. The segment covering 29 to 39 (GGPEHSIEEVA) has biased composition (basic and acidic residues). An Integrase catalytic domain is found at 169–329 (ASSMPNDTWS…IPPAQFAANY (161 aa)).

The chain is Insertion element IS476 uncharacterized 39.2 kDa protein from Xanthomonas euvesicatoria.